The following is a 92-amino-acid chain: Cell division protein FtsB (92 aa).

At 1–3 the chain is on the cytoplasmic side; sequence MKV. A helical transmembrane segment spans residues 4–21; sequence VPILLFVLLAALQYRLWF. The Periplasmic segment spans residues 22 to 92; it reads GKNSIPEYVA…TFYRILPSEE (71 aa). Residues 31 to 74 adopt a coiled-coil conformation; sequence AMEKSVAEQAEQNTELLQRNNLLKADIQDLKVGLEAVEERARNE.

This sequence belongs to the FtsB family. Part of a complex composed of FtsB, FtsL and FtsQ.

It localises to the cell inner membrane. Functionally, essential cell division protein. May link together the upstream cell division proteins, which are predominantly cytoplasmic, with the downstream cell division proteins, which are predominantly periplasmic. The polypeptide is Cell division protein FtsB (Pseudoalteromonas atlantica (strain T6c / ATCC BAA-1087)).